Here is a 210-residue protein sequence, read N- to C-terminus: ATP-dependent Clp protease proteolytic subunit (210 aa).

S106 (nucleophile) is an active-site residue. Residue H131 is part of the active site.

This sequence belongs to the peptidase S14 family. In terms of assembly, fourteen ClpP subunits assemble into 2 heptameric rings which stack back to back to give a disk-like structure with a central cavity, resembling the structure of eukaryotic proteasomes.

It localises to the cytoplasm. It carries out the reaction Hydrolysis of proteins to small peptides in the presence of ATP and magnesium. alpha-casein is the usual test substrate. In the absence of ATP, only oligopeptides shorter than five residues are hydrolyzed (such as succinyl-Leu-Tyr-|-NHMec, and Leu-Tyr-Leu-|-Tyr-Trp, in which cleavage of the -Tyr-|-Leu- and -Tyr-|-Trp bonds also occurs).. Cleaves peptides in various proteins in a process that requires ATP hydrolysis. Has a chymotrypsin-like activity. Plays a major role in the degradation of misfolded proteins. The polypeptide is ATP-dependent Clp protease proteolytic subunit (Rhodopseudomonas palustris (strain BisB18)).